Consider the following 503-residue polypeptide: Lithocholate 6-beta-hydroxylase (503 aa).

Residue cysteine 442 participates in heme binding.

This sequence belongs to the cytochrome P450 family. The cofactor is heme.

It is found in the endoplasmic reticulum membrane. The protein localises to the microsome membrane. The catalysed reaction is lithocholate + reduced [NADPH--hemoprotein reductase] + O2 = 6beta-hydroxylithocholate + oxidized [NADPH--hemoprotein reductase] + H2O + H(+). Its function is as follows. Catalyzes the 6 beta-hydroxylation of lithocholic acid and steroid hormones. The polypeptide is Lithocholate 6-beta-hydroxylase (CYP3A10) (Mesocricetus auratus (Golden hamster)).